The following is a 100-amino-acid chain: Defensin-6 (100 aa).

Residues 1 to 19 form the signal peptide; the sequence is MRTLTILTAVLLVALQAKA. Residues 20–68 constitute a propeptide that is removed on maturation; sequence EPLQAEDDPLQAKAYEADAQEQRGANDQDFAVSFAEDASSSLRALGSTR. 3 disulfides stabilise this stretch: Cys-72/Cys-99, Cys-74/Cys-88, and Cys-78/Cys-98.

It belongs to the alpha-defensin family. In terms of assembly, homodimer. Self-assembles into higher-order oligomers termed nanonets, fibril-like structures that entrap microbes. Self-assembly into nanonets seems to protect against proteolytic digestion in duodenal fluid. Interacts with Y.enterocolitica invasin and S.typhimurium fliC/flagellin; the interaction creates an anchoring site for progressive DEFA6 self-assembly into nanonets. Proteolytically cleaved by trypsin at Arg-68; the propeptide is stored in the tissue of the small intestine and the mature peptide is found in the luminal fluid; cleavage may occur during or after release into the lumen. The N-terminal propeptide region suppresses self-assembly and renders DEFA6 propeptide unable to agglutinate bacteria and protect human epithelial cells from bacterial invasion. In terms of processing, under reducing conditions, naturally present in the gut owing to the low redox potential or enzymatically generated by the thioredoxin system, the disulfide bridges are opened leading to a conformational change of DEF6, thereby changing its antimicrobial spectrum. The reduced form exhibits inhibitory activity against anaerobic bacteria, in contrast to the minimal antimicrobial activity of the disulfide-linked oxidized form. The formation of higher-order nanonets and bacterial entrapment is independent of the redox state. Expressed in Paneth cells of the small intestine (at protein level).

It is found in the secreted. The protein resides in the cytoplasmic vesicle. Its subcellular location is the secretory vesicle. Host-defense peptide that contributes to intestinal innate immunity and mediates homeostasis at mucosal surfaces by forming higher-order oligomers that capture bacteria and prevent microbial invasion of the epithelium. After binding to bacterial surface proteins, undergoes ordered self-assembly to form fibril-like nanonets that surround and entangle bacteria and thereby prevent bacterial invasion across the epithelial barrier. Entangles and agglutinates Gram-negative bacteria, such as E.coli, S.typhimurium and Y.enterocolitica, and Gram-positive bacteria such as L.monocytogenes, thereby protecting the intestine against invasion by enteric bacterial pathogens. Blocks adhesion of C.albicans to intestinal epithelial cells and thereby suppresses fungal invasion of epithelial cells and biofilm formation. Under reducing conditions and in an acidic environment similar to the intestinal milieu, exhibits inhibitory activity against anaerobic bacteria such as B.adolescentis, L.acidophilus and B.breve, as well as B.longum and S.thermophilus, possibly by leading to alterations in bacterial cell envelope structures. The disulfide-linked oxidized form exhibits negligible antimicrobial activity against Gram-negative and Gram-positive bacteria, as compared to the enteric defensin DEFA5. The polypeptide is Defensin-6 (DEFA6) (Homo sapiens (Human)).